The primary structure comprises 500 residues: Bifunctional protein GlmU (500 aa).

The tract at residues 1 to 242 is pyrophosphorylase; that stretch reads MPVQTAVVVL…SAKVAGANDR (242 aa). UDP-N-acetyl-alpha-D-glucosamine-binding positions include 10–13, lysine 24, glutamine 81, and 86–87; these read LAAG and GT. Aspartate 112 contacts Mg(2+). Glycine 151, glutamate 167, asparagine 182, and asparagine 240 together coordinate UDP-N-acetyl-alpha-D-glucosamine. Asparagine 240 contacts Mg(2+). Positions 243–263 are linker; the sequence is VQLSRLAAELNRRTVENWMRA. The tract at residues 264 to 500 is N-acetyltransferase; that stretch reads GVTVVDPSTT…KQDLKDGIEQ (237 aa). 2 residues coordinate UDP-N-acetyl-alpha-D-glucosamine: arginine 345 and lysine 363. The active-site Proton acceptor is histidine 375. Tyrosine 378 and asparagine 389 together coordinate UDP-N-acetyl-alpha-D-glucosamine. Acetyl-CoA-binding positions include alanine 392, 398–399, serine 417, and alanine 435; that span reads NY. The interval 459 to 500 is disordered; sequence DGWVQRNRPGTPAAEAASAAGPHHSSDLHETEKQDLKDGIEQ. Positions 482–500 are enriched in basic and acidic residues; that stretch reads HSSDLHETEKQDLKDGIEQ.

The protein in the N-terminal section; belongs to the N-acetylglucosamine-1-phosphate uridyltransferase family. It in the C-terminal section; belongs to the transferase hexapeptide repeat family. As to quaternary structure, homotrimer. The cofactor is Mg(2+).

The protein localises to the cytoplasm. It carries out the reaction alpha-D-glucosamine 1-phosphate + acetyl-CoA = N-acetyl-alpha-D-glucosamine 1-phosphate + CoA + H(+). It catalyses the reaction N-acetyl-alpha-D-glucosamine 1-phosphate + UTP + H(+) = UDP-N-acetyl-alpha-D-glucosamine + diphosphate. It participates in nucleotide-sugar biosynthesis; UDP-N-acetyl-alpha-D-glucosamine biosynthesis; N-acetyl-alpha-D-glucosamine 1-phosphate from alpha-D-glucosamine 6-phosphate (route II): step 2/2. Its pathway is nucleotide-sugar biosynthesis; UDP-N-acetyl-alpha-D-glucosamine biosynthesis; UDP-N-acetyl-alpha-D-glucosamine from N-acetyl-alpha-D-glucosamine 1-phosphate: step 1/1. The protein operates within bacterial outer membrane biogenesis; LPS lipid A biosynthesis. Catalyzes the last two sequential reactions in the de novo biosynthetic pathway for UDP-N-acetylglucosamine (UDP-GlcNAc). The C-terminal domain catalyzes the transfer of acetyl group from acetyl coenzyme A to glucosamine-1-phosphate (GlcN-1-P) to produce N-acetylglucosamine-1-phosphate (GlcNAc-1-P), which is converted into UDP-GlcNAc by the transfer of uridine 5-monophosphate (from uridine 5-triphosphate), a reaction catalyzed by the N-terminal domain. The sequence is that of Bifunctional protein GlmU from Rhodococcus opacus (strain B4).